A 101-amino-acid polypeptide reads, in one-letter code: Small ribosomal subunit protein uS14 (101 aa).

The protein belongs to the universal ribosomal protein uS14 family. As to quaternary structure, part of the 30S ribosomal subunit. Contacts proteins S3 and S10.

Functionally, binds 16S rRNA, required for the assembly of 30S particles and may also be responsible for determining the conformation of the 16S rRNA at the A site. This is Small ribosomal subunit protein uS14 from Acinetobacter baumannii (strain AB307-0294).